The sequence spans 182 residues: Shikimate kinase (182 aa).

14–19 (GAGKTT) lines the ATP pocket. A Mg(2+)-binding site is contributed by T18. 3 residues coordinate substrate: D36, R60, and G84. R122 contributes to the ATP binding site. R141 contributes to the substrate binding site.

Belongs to the shikimate kinase family. In terms of assembly, monomer. It depends on Mg(2+) as a cofactor.

Its subcellular location is the cytoplasm. The enzyme catalyses shikimate + ATP = 3-phosphoshikimate + ADP + H(+). The protein operates within metabolic intermediate biosynthesis; chorismate biosynthesis; chorismate from D-erythrose 4-phosphate and phosphoenolpyruvate: step 5/7. Its function is as follows. Catalyzes the specific phosphorylation of the 3-hydroxyl group of shikimic acid using ATP as a cosubstrate. In Marinomonas sp. (strain MWYL1), this protein is Shikimate kinase.